A 172-amino-acid chain; its full sequence is uncharacterized protein (172 aa).

2 disordered regions span residues 1-54 (MPRR…GGSS) and 82-111 (ITGGFSGSGSNNAPADTSVPQSSYSNSVPE). Residues 14–29 (AAPARSASTAAALPPR) are compositionally biased toward low complexity. Over residues 30–47 (TMAPPPAPSRVQQAPPPT) the composition is skewed to pro residues. Residues 89–109 (SGSNNAPADTSVPQSSYSNSV) are compositionally biased toward polar residues.

This is an uncharacterized protein from Schizosaccharomyces pombe (strain 972 / ATCC 24843) (Fission yeast).